We begin with the raw amino-acid sequence, 960 residues long: Anoctamin-1 (960 aa).

Over 1–333 the chain is Cytoplasmic; it reads MRVPEKYSTL…FGEKVGLYFA (333 aa). The tract at residues 92–115 is disordered; it reads TRSVRQDQPLPGKGSPVDAGSPEV. S196 is subject to Phosphoserine. Residues 334–354 traverse the membrane as a helical segment; that stretch reads WLGAYTQMLIPASIVGVIVFL. Topologically, residues 355–406 are extracellular; sequence YGCATVDENIPSMEMCDQRYNITMCPLCDKTCSYWKMSSACATARASHLFDN. 4 cysteine pairs are disulfide-bonded: C370/C395, C379/C836, C382/C386, and C625/C630. Residues 407-427 traverse the membrane as a helical segment; it reads PATVFFSVFMALWAATFMEHW. Position 425 (E425) interacts with Ca(2+). Residues 428 to 493 are Cytoplasmic-facing; sequence KRKQMRLNYR…RDRFPAYFTN (66 aa). A helical transmembrane segment spans residues 494–514; the sequence is LVSIIFMIAVTFAIVLGVIIY. At 515-542 the chain is on the extracellular side; it reads RISTAAALAMNSSPSVRSNIRVTVTATA. A helical transmembrane segment spans residues 543-563; it reads VIINLVVIILLDEVYGCIARW. Over 564 to 581 the chain is Cytoplasmic; the sequence is LTKIEVPKTEKSFEERLT. Residues 582–602 traverse the membrane as a helical segment; sequence FKAFLLKFVNSYTPIFYVAFF. At 603 to 631 the chain is on the extracellular side; sequence KGRFVGRPGDYVYIFRSFRMEECAPGGCL. Residues 632-652 traverse the membrane as a helical segment; that stretch reads MELCIQLSIIMLGKQLIQNNL. Residues N651, E654, E702, E705, E734, and D738 each contribute to the Ca(2+) site. At 653-699 the chain is on the cytoplasmic side; it reads FEIGIPKMKKFIRYLKLRRQSPSDREEYVKRKQRYEVDFNLEPFAGL. Helical transmembrane passes span 700–720 and 721–741; these read TPEYMEMIIQFGFVTLFVASF and PLAPLFALLNNIIEIRLDAKK. The Cytoplasmic portion of the chain corresponds to 742–758; sequence FVTELRRPVAIRAKDIG. Residues 759-779 traverse the membrane as a helical segment; that stretch reads IWYNILRGVGKLAVIINAFVI. Over 780-866 the chain is Extracellular; it reads SFTSDFIPRL…FWAVLAARLA (87 aa). N806 is a glycosylation site (N-linked (GlcNAc...) asparagine). A helical transmembrane segment spans residues 867–887; that stretch reads FVIVFQNLVMFMSDFVDWVIP. Positions 883 and 888 each coordinate Ca(2+). Residues 888–960 lie on the Cytoplasmic side of the membrane; it reads DIPKDISQQI…PSYEYHGDAL (73 aa). The disordered stretch occupies residues 928–960; the sequence is PRDVPCNNHSPTTHPEAGDGSPVPSYEYHGDAL.

This sequence belongs to the anoctamin family. Homodimer. Interacts with CFTR. Interacts with TRPV4. Expressed at the apical surface of the vomeronasal epithelium (at protein level). Expressed in the lateral and septal nasal glands (at protein level). Highly expressed in pulmonary bronchiole epithelial cells, pancreatic and submandibular gland acinar cells, kidney proximal tubule, all retinal cell layers, most sensory cells of dorsal root ganglia, Leydig cells and spermatocytes (at protein level). In the dorsal root ganglia, detected in small-diameter nociceptive neurons and in larger myelinated neurons (at protein level). In the dorsal root ganglia, expressed in MrgprA3-positive neurons (at protein level). In the developing brain, highly expressed in the ventricular zone and subventricular zone at 12.5 dpc and 14.5 dpc where it is detected in radial glial cells but not in neurons with expression dramatically decreased at P1 (at protein level). Highly expressed in the endometrial stroma (at protein level). In taste buds of the vallate papillae, expressed in the apical region of type I taste cells (at protein level). In the kidney, expressed in the collecting duct (at protein level). In the retina, strongly expressed in the outer and inner plexiform layers, weakly expressed in some somata in the inner nuclear layer and ganglion cell layer and not expressed in the outer nuclear layer (at protein level). Expressed in various retinal neurons including rod bipolar cells (at protein level). Expressed in eye, brain, myometrium and endometrium with higher levels in endometrium than myometrium in estrus and day 18 pregnant mice. Not detected in uterine smooth muscle cells. Expressed at high levels in the thyroid gland and gastrointestinal muscles.

The protein resides in the apical cell membrane. It is found in the presynapse. The catalysed reaction is chloride(in) = chloride(out). With respect to regulation, ATP and calmodulin are essential for its activation. Channel activity is inhibited by CFTR protein and by chloride inhibitors such as niflumic acid (NFA) and 4,4'-diisothiocyanatostilbene-2,2'-disulfonic acid (DIDS). Activated by heat with activation seen at temperatures above 44 degrees Celsius. Activated by BDNF in radial glial cells. Calcium-activated chloride channel (CaCC). Plays a role in transepithelial anion transport and smooth muscle contraction. Required for the normal functioning of the interstitial cells of Cajal (ICCs) which generate electrical pacemaker activity in gastrointestinal smooth muscles. Acts as a major contributor to basal and stimulated chloride conductance in airway epithelial cells and plays an important role in tracheal cartilage development. Required for CFTR activation by enhancing endoplasmic reticulum Ca(2+) store release and is also required for CFTR membrane expression. Required for basal and ATP-dependent mucus secretion in airways and intestine, probably by controlling exocytosis of mucus-filled granules by providing Ca(2+) to an apical signaling compartment. Contributes to airway mucus expression induced by interleukins IL3 and IL8 and by the asthma-associated protein CLCA1 and is required for expression of mucin MUC5AC. However, was shown in another study not to be required for MUC5AC expression. Plays a role in the propagation of Ca(2+) waves in Kolliker's organ in the cochlea and contributes to the refinement of auditory brainstem circuitries prior to hearing onset. In vomeronasal sensory neurons, modulates spontaneous firing patterns in the absence of stimuli as well as the firing pattern of pheromone-evoked activity. Responsible for calcium-activated chloride channel activity in type I taste cells of the vallate papillae. Acts as a heat sensor in nociceptive neurons. In dorsal root ganglion neurons, plays a role in mediating non-histaminergic Mas-related G-protein coupled receptor (MRGPR)-dependent itching, acting as a downstream effector of MRGPRs. In the developing brain, required for the Ca(2+)-dependent process extension of radial glial cells. The sequence is that of Anoctamin-1 (Ano1) from Mus musculus (Mouse).